The sequence spans 359 residues: Ornithine cyclodeaminase (359 aa).

Residues R53 and K77 each contribute to the L-ornithine site. NAD(+) contacts are provided by residues T92, R120, 147 to 148 (AQ), D169, T209, 232 to 235 (VGGD), K239, and S300. R120 is a binding site for L-ornithine. D235 contributes to the L-ornithine binding site. The active-site Proton donor/acceptor is the D235. An L-ornithine-binding site is contributed by V301.

The protein belongs to the ornithine cyclodeaminase/mu-crystallin family. The cofactor is NAD(+).

It catalyses the reaction L-ornithine = L-proline + NH4(+). Its pathway is amino-acid biosynthesis; L-proline biosynthesis; L-proline from L-ornithine: step 1/1. Catalyzes the conversion of L-ornithine into L-proline with release of ammonia. The sequence is that of Ornithine cyclodeaminase from Brucella abortus biovar 1 (strain 9-941).